Here is a 348-residue protein sequence, read N- to C-terminus: Caricain (348 aa).

The first 16 residues, 1–16 (MAMIPSISKLLFVAIC), serve as a signal peptide directing secretion. Residues 17–132 (LFVHMSVSFG…EEFINEDTVN (116 aa)) constitute a propeptide, activation peptide. Residue N86 is glycosylated (N-linked (GlcNAc...) asparagine). 3 disulfides stabilise this stretch: C154–C195, C188–C227, and C285–C336. Residue C157 is part of the active site. Residue C157 coordinates E64. Catalysis depends on residues H291 and N311.

Belongs to the peptidase C1 family. Monomer.

The enzyme catalyses Hydrolysis of proteins with broad specificity for peptide bonds, similar to those of papain and chymopapain.. Repressed by the active-site-directed cysteine protease inhibitor E64 (L-trans-epoxysuccinyl-leucylamide-(4-guanido)-butane) produced by Aspergillus japonicus. Functionally, cysteine proteinase with a high level of diversity in substrate specificity. The sequence is that of Caricain from Carica papaya (Papaya).